The sequence spans 163 residues: Phosphopantetheine adenylyltransferase (163 aa).

Substrate is bound at residue S9. Residues 9–10 (SF) and H17 contribute to the ATP site. 3 residues coordinate substrate: K41, V78, and R92. ATP contacts are provided by residues 93–95 (GLR), E103, and 128–134 (SRPITAT).

Belongs to the bacterial CoaD family. As to quaternary structure, homohexamer. Mg(2+) serves as cofactor.

The protein resides in the cytoplasm. It catalyses the reaction (R)-4'-phosphopantetheine + ATP + H(+) = 3'-dephospho-CoA + diphosphate. It participates in cofactor biosynthesis; coenzyme A biosynthesis; CoA from (R)-pantothenate: step 4/5. Reversibly transfers an adenylyl group from ATP to 4'-phosphopantetheine, yielding dephospho-CoA (dPCoA) and pyrophosphate. The sequence is that of Phosphopantetheine adenylyltransferase from Rhizobium meliloti (strain 1021) (Ensifer meliloti).